The sequence spans 291 residues: ATP synthase subunit b 2 (291 aa).

A helical membrane pass occupies residues 2 to 22; the sequence is LIDGFTVVAQIVNFLILVWLL.

This sequence belongs to the ATPase B chain family. As to quaternary structure, F-type ATPases have 2 components, F(1) - the catalytic core - and F(0) - the membrane proton channel. F(1) has five subunits: alpha(3), beta(3), gamma(1), delta(1), epsilon(1). F(0) has three main subunits: a(1), b(2) and c(10-14). The alpha and beta chains form an alternating ring which encloses part of the gamma chain. F(1) is attached to F(0) by a central stalk formed by the gamma and epsilon chains, while a peripheral stalk is formed by the delta and b chains.

It localises to the cell inner membrane. In terms of biological role, f(1)F(0) ATP synthase produces ATP from ADP in the presence of a proton or sodium gradient. F-type ATPases consist of two structural domains, F(1) containing the extramembraneous catalytic core and F(0) containing the membrane proton channel, linked together by a central stalk and a peripheral stalk. During catalysis, ATP synthesis in the catalytic domain of F(1) is coupled via a rotary mechanism of the central stalk subunits to proton translocation. Functionally, component of the F(0) channel, it forms part of the peripheral stalk, linking F(1) to F(0). The protein is ATP synthase subunit b 2 of Nitrosospira multiformis (strain ATCC 25196 / NCIMB 11849 / C 71).